A 415-amino-acid chain; its full sequence is Adenylosuccinate synthetase (415 aa).

GTP-binding positions include 11-17 and 39-41; these read GDEGKGK and GHT. The active-site Proton acceptor is D12. Residues D12 and G39 each contribute to the Mg(2+) site. IMP contacts are provided by residues 12-15, 37-40, T124, R138, Q218, T233, and R297; these read DEGK and NAGH. H40 functions as the Proton donor in the catalytic mechanism. Residue 293–299 participates in substrate binding; it reads TTTGRAR. GTP-binding positions include R299, 325–327, and 403–405; these read KLD and STS.

The protein belongs to the adenylosuccinate synthetase family. As to quaternary structure, homodimer. Mg(2+) serves as cofactor.

The protein localises to the cytoplasm. The enzyme catalyses IMP + L-aspartate + GTP = N(6)-(1,2-dicarboxyethyl)-AMP + GDP + phosphate + 2 H(+). Its pathway is purine metabolism; AMP biosynthesis via de novo pathway; AMP from IMP: step 1/2. Functionally, plays an important role in the de novo pathway of purine nucleotide biosynthesis. Catalyzes the first committed step in the biosynthesis of AMP from IMP. The chain is Adenylosuccinate synthetase from Helicobacter hepaticus (strain ATCC 51449 / 3B1).